The following is a 1438-amino-acid chain: DNA-directed RNA polymerase subunit beta' (1438 aa).

4 residues coordinate Zn(2+): cysteine 70, cysteine 72, cysteine 85, and cysteine 88. Residues aspartate 461, aspartate 463, and aspartate 465 each coordinate Mg(2+). The Zn(2+) site is built by cysteine 821, cysteine 895, cysteine 902, and cysteine 905. Residues 1413–1427 are compositionally biased toward low complexity; it reads DAMAAAMGGDSAGGD. The segment at 1413–1438 is disordered; the sequence is DAMAAAMGGDSAGGDTKPEAPEASEE.

Belongs to the RNA polymerase beta' chain family. The RNAP catalytic core consists of 2 alpha, 1 beta, 1 beta' and 1 omega subunit. When a sigma factor is associated with the core the holoenzyme is formed, which can initiate transcription. Requires Mg(2+) as cofactor. The cofactor is Zn(2+).

It carries out the reaction RNA(n) + a ribonucleoside 5'-triphosphate = RNA(n+1) + diphosphate. Its function is as follows. DNA-dependent RNA polymerase catalyzes the transcription of DNA into RNA using the four ribonucleoside triphosphates as substrates. This Erythrobacter litoralis (strain HTCC2594) protein is DNA-directed RNA polymerase subunit beta'.